A 283-amino-acid polypeptide reads, in one-letter code: Acetylglutamate kinase (283 aa).

Substrate contacts are provided by residues 63 to 64, arginine 85, and asparagine 178; that span reads GG.

This sequence belongs to the acetylglutamate kinase family. ArgB subfamily.

It is found in the cytoplasm. It catalyses the reaction N-acetyl-L-glutamate + ATP = N-acetyl-L-glutamyl 5-phosphate + ADP. The protein operates within amino-acid biosynthesis; L-arginine biosynthesis; N(2)-acetyl-L-ornithine from L-glutamate: step 2/4. Catalyzes the ATP-dependent phosphorylation of N-acetyl-L-glutamate. In Prochlorococcus marinus (strain MIT 9301), this protein is Acetylglutamate kinase.